Here is a 154-residue protein sequence, read N- to C-terminus: Deoxyuridine 5'-triphosphate nucleotidohydrolase (154 aa).

Residues 74 to 76 (RSG), Asn87, 91 to 93 (TID), and Lys101 contribute to the substrate site.

It belongs to the dUTPase family. Mg(2+) is required as a cofactor.

The enzyme catalyses dUTP + H2O = dUMP + diphosphate + H(+). Its pathway is pyrimidine metabolism; dUMP biosynthesis; dUMP from dCTP (dUTP route): step 2/2. In terms of biological role, this enzyme is involved in nucleotide metabolism: it produces dUMP, the immediate precursor of thymidine nucleotides and it decreases the intracellular concentration of dUTP so that uracil cannot be incorporated into DNA. The polypeptide is Deoxyuridine 5'-triphosphate nucleotidohydrolase (Cytophaga hutchinsonii (strain ATCC 33406 / DSM 1761 / CIP 103989 / NBRC 15051 / NCIMB 9469 / D465)).